The sequence spans 242 residues: Ras-like protein family member 11A (242 aa).

Residues 17–241 (ESSSDYLLPK…SSKAKASSAL (225 aa)) are small GTPase-like. GTP is bound by residues 34 to 41 (GAGCVGKS), 81 to 88 (DTPGGIQA), and 147 to 150 (NKGD).

It belongs to the small GTPase superfamily. Ras family. Interacts with UBF/UBTF.

The protein resides in the nucleus. It is found in the nucleolus. The enzyme catalyses GTP + H2O = GDP + phosphate + H(+). In terms of biological role, regulator of rDNA transcription. Acts in cooperation UBF/UBTF and positively regulates RNA polymerase I transcription. This Mus musculus (Mouse) protein is Ras-like protein family member 11A.